The chain runs to 141 residues: HTH-type transcriptional repressor NsrR (141 aa).

An HTH rrf2-type domain is found at 2-129 (QLTSFTDYAL…DDCTIEELLS (128 aa)). The H-T-H motif DNA-binding region spans 28–51 (ITEVTDLFGVSRNHMVKVINRLGQ). The [2Fe-2S] cluster site is built by Cys91, Cys96, and Cys102.

[2Fe-2S] cluster is required as a cofactor.

Functionally, nitric oxide-sensitive repressor of genes involved in protecting the cell against nitrosative stress. May require iron for activity. In Vibrio campbellii (strain ATCC BAA-1116), this protein is HTH-type transcriptional repressor NsrR.